The chain runs to 156 residues: MARRRRAEVRQLQPDLVYGDVLVTAFINKIMRDGKKNLAARIFYDACKIIQEKTGQEPLKVFKQAVENVKPRMEVRSRRVGGANYQVPMEVSPRRQQSLALRWLVQAANQRPERRAAVRIAHELMDAAEGKGGAVKKKEDVERMAEANRAYAHYRW.

In terms of assembly, part of the 30S ribosomal subunit. Contacts proteins S9 and S11. Binds to the C-terminus of IF3 and to the C-terminus of Era.

One of the primary rRNA binding proteins, it binds directly to 3'-end of the 16S rRNA where it nucleates assembly of the head domain of the 30S subunit. Is located at the subunit interface close to the decoding center. Binds mRNA and the E site tRNA blocking its exit path in the ribosome. This blockage implies that this section of the ribosome must be able to move to release the deacetylated tRNA. The protein is Small ribosomal subunit protein uS7 (rpsG) of Thermus thermophilus (strain ATCC 27634 / DSM 579 / HB8).